The primary structure comprises 243 residues: Cell division protein ZipA (243 aa).

At 1–4 (MSDV) the chain is on the periplasmic side. A helical transmembrane segment spans residues 5–25 (TLLRIGIAIVGILFVAAVFFF). Over 26-243 (STPKTSAHRV…VPPLIKNSRW (218 aa)) the chain is Cytoplasmic. Residues 32 to 89 (AHRVRTKKEEPPRERREPMLSTEVDNSPHQSVDEVPASVPQQQVNPEATKPGEIELGK) are disordered. A compositionally biased stretch (basic and acidic residues) spans 38-49 (KKEEPPRERREP).

The protein belongs to the ZipA family. As to quaternary structure, interacts with FtsZ via their C-terminal domains.

Its subcellular location is the cell inner membrane. In terms of biological role, essential cell division protein that stabilizes the FtsZ protofilaments by cross-linking them and that serves as a cytoplasmic membrane anchor for the Z ring. Also required for the recruitment to the septal ring of downstream cell division proteins. The protein is Cell division protein ZipA of Xylella fastidiosa (strain Temecula1 / ATCC 700964).